The chain runs to 526 residues: Tyrosine 2,3-aminomutase (526 aa).

Tyrosine 41 acts as the Proton donor/acceptor in catalysis. Histidine 71 contributes to the substrate binding site. The 5-imidazolinone (Ala-Gly) cross-link spans 130–132 (ASG). Serine 131 is modified (2,3-didehydroalanine (Ser)). Positions 183 and 288 each coordinate substrate.

It belongs to the TAL/TAM family. As to quaternary structure, homotetramer; dimer of dimers. Post-translationally, contains an active site 4-methylidene-imidazol-5-one (MIO), which is formed autocatalytically by cyclization and dehydration of residues Ala-Ser-Gly.

It catalyses the reaction L-tyrosine = 3-amino-3-(4-hydroxyphenyl)propanoate. The enzyme catalyses L-tyrosine = (E)-4-coumarate + NH4(+). Its function is as follows. Has aminomutase and, to a much lesser extent, ammonia-lyase activity. Primarily, catalyzes the rearrangement of L-tyrosine to S-beta-tyrosine, which is probably incorporated into secondary metabolite myxovalargin. The aminomutase activity exclusively produces S-beta-tyrosine. This is Tyrosine 2,3-aminomutase from Myxococcus sp. (strain Mx-B0).